The sequence spans 1574 residues: Myosin-2 (1574 aa).

An N-acetylserine modification is found at Ser-2. The region spanning 4 to 57 (EVGTRCWYPHKELGWIGAEVIKNEFNDGKYHLELQLEDDEIVSVDTKDLNNDKD) is the Myosin N-terminal SH3-like domain. In terms of domain architecture, Myosin motor spans 70-781 (EATEDLTSLS…MLAYLEKLRS (712 aa)). Position 164 to 171 (164 to 171 (GESGAGKT)) interacts with ATP. The actin-binding stretch occupies residues 443 to 523 (FIGVLDIYGF…LGILSLLDEE (81 aa)). IQ domains follow at residues 784 to 806 (MHNS…QYLQ), 807 to 831 (ISQA…NDEM), 832 to 855 (KVNC…VFSV), 856 to 879 (LRTI…KQEH), 880 to 902 (EYNA…RFLR), and 903 to 932 (TKKD…DAKS). The stretch at 933-1088 (VNHLKEVSYK…RLQTAMSLGT (156 aa)) forms a coiled coil. Residues 1087-1574 (GTVTTSVLPQ…VAQQVVQDGH (488 aa)) are non alpha-helical, tail domain. Residue Thr-1097 is modified to Phosphothreonine. Ser-1121 carries the post-translational modification Phosphoserine. The Dilute domain maps to 1226-1501 (AQVLTTIQKV…LRYVADIVKK (276 aa)).

This sequence belongs to the TRAFAC class myosin-kinesin ATPase superfamily. Myosin family. Homodimer. Interacts with calmodulin (CMD1) and the myosin light chain MLC1 through its IQ repeats. Binds to the membrane receptors SEC4 and VAC17 to transport secretory vesicles and the vacuole, respectively. Binds to KAR9, which transports BIM1-coated cytoplasmic microtubules that are attached to the spindle pole body into the emerging bud, thereby correctly orienting the mitotic spindle. Interacts with YPT11 and MMR1 to accelerate mitochondrial distribution to the bud. Interacts with SHE4 and localizes it to the bud tip. Interacts with RHO3 and SMY1, putative regulators of MYO2 function. Interacts with SRO7.

Its subcellular location is the bud neck. It localises to the bud tip. Its function is as follows. Myosin heavy chain that is required for the cell cycle-regulated transport of various organelles and proteins for their segregation. Functions by binding with its tail domain to receptor proteins on organelles and exerting force with its N-terminal motor domain against actin filaments, thereby transporting its cargo along polarized actin cables. Essential for the delivery of secretory vesicles to sites of active growth during bud emergence and cytokinesis. Required for segregation and inheritance of peroxisomes, late Golgi compartments, mitochondria and the vacuole to the daughter cell during cell division. Also required for correct alignment of the spindle during mitosis. This chain is Myosin-2 (MYO2), found in Saccharomyces cerevisiae (strain ATCC 204508 / S288c) (Baker's yeast).